The chain runs to 194 residues: Holliday junction branch migration complex subunit RuvA (194 aa).

The segment at 1–64 (MIGRLRGVLT…DDSAALYGFL (64 aa)) is domain I. The interval 65–140 (SESERRLFRH…RAADFNNGIS (76 aa)) is domain II. A flexible linker region spans residues 140–144 (STSGK). A domain III region spans residues 145 to 194 (LNLDTVSEAALALQQLGYKPAEAARMARDAGTESDDVAIVIKKALQTVLR).

It belongs to the RuvA family. Homotetramer. Forms an RuvA(8)-RuvB(12)-Holliday junction (HJ) complex. HJ DNA is sandwiched between 2 RuvA tetramers; dsDNA enters through RuvA and exits via RuvB. An RuvB hexamer assembles on each DNA strand where it exits the tetramer. Each RuvB hexamer is contacted by two RuvA subunits (via domain III) on 2 adjacent RuvB subunits; this complex drives branch migration. In the full resolvosome a probable DNA-RuvA(4)-RuvB(12)-RuvC(2) complex forms which resolves the HJ.

It is found in the cytoplasm. In terms of biological role, the RuvA-RuvB-RuvC complex processes Holliday junction (HJ) DNA during genetic recombination and DNA repair, while the RuvA-RuvB complex plays an important role in the rescue of blocked DNA replication forks via replication fork reversal (RFR). RuvA specifically binds to HJ cruciform DNA, conferring on it an open structure. The RuvB hexamer acts as an ATP-dependent pump, pulling dsDNA into and through the RuvAB complex. HJ branch migration allows RuvC to scan DNA until it finds its consensus sequence, where it cleaves and resolves the cruciform DNA. The chain is Holliday junction branch migration complex subunit RuvA from Xylella fastidiosa (strain M23).